Here is a 190-residue protein sequence, read N- to C-terminus: Segregation and condensation protein B (190 aa).

It belongs to the ScpB family. Homodimer. Homodimerization may be required to stabilize the binding of ScpA to the Smc head domains. Component of a cohesin-like complex composed of ScpA, ScpB and the Smc homodimer, in which ScpA and ScpB bind to the head domain of Smc. The presence of the three proteins is required for the association of the complex with DNA.

It localises to the cytoplasm. Functionally, participates in chromosomal partition during cell division. May act via the formation of a condensin-like complex containing Smc and ScpA that pull DNA away from mid-cell into both cell halves. In Bacillus cereus (strain G9842), this protein is Segregation and condensation protein B.